Reading from the N-terminus, the 263-residue chain is uncharacterized protein (263 aa).

ATP is bound at residue 31 to 38; that stretch reads GPTGSGKT.

Belongs to the CbbQ/NirQ/NorQ/GpvN family.

This is an uncharacterized protein from Staphylococcus epidermidis (strain ATCC 35984 / DSM 28319 / BCRC 17069 / CCUG 31568 / BM 3577 / RP62A).